Reading from the N-terminus, the 356-residue chain is Photosynthetic reaction center cytochrome c subunit (356 aa).

The signal sequence occupies residues 1–20; the sequence is MKQLIVNSVATVALASLVAG. A lipid anchor (S-diacylglycerol cysteine) is attached at Cys-21. Residues Met-94, Cys-107, Cys-110, His-111, Met-130, His-144, Cys-152, Cys-155, His-156, Met-253, Cys-264, Cys-267, His-268, Cys-325, Cys-328, and His-329 each coordinate heme.

Component of the photosynthetic reaction center composed of protein subunits L (PufL), M (PufM), H (PuhA) and cytochrome C (PufC). Binds 4 heme groups per subunit. In terms of processing, after the signal sequence is removed, the N-terminal cysteine is modified to form a diacylglyceride thioether, but the alpha-amino group is free and is not N-palmitoylated.

The protein localises to the cellular chromatophore membrane. The reaction center of purple bacteria contains a tightly bound cytochrome molecule which re-reduces the photo oxidized primary electron donor. The chain is Photosynthetic reaction center cytochrome c subunit from Blastochloris viridis (Rhodopseudomonas viridis).